The primary structure comprises 156 residues: MKRKYYWIYINIIFFIITVDFYSKKWILNHLNIYEKQKVFFILNLFHVHNFGAAFSILSDQNGWQKYFLLIFSIIIILAIIKIMIKFKKKDKNKILSYSLILAGAIGNLIDRINYGFVIDFIDLHFKSWHFATFNIADFSIFIGMIMIIKKNYYNS.

A run of 4 helical transmembrane segments spans residues 8–28 (IYIN…KWIL), 39–59 (VFFI…SILS), 67–87 (YFLL…MIKF), and 99–119 (SLIL…GFVI). Active-site residues include D120 and D138. A helical membrane pass occupies residues 129–149 (WHFATFNIADFSIFIGMIMII).

This sequence belongs to the peptidase A8 family.

It is found in the cell inner membrane. It carries out the reaction Release of signal peptides from bacterial membrane prolipoproteins. Hydrolyzes -Xaa-Yaa-Zaa-|-(S,diacylglyceryl)Cys-, in which Xaa is hydrophobic (preferably Leu), and Yaa (Ala or Ser) and Zaa (Gly or Ala) have small, neutral side chains.. The protein operates within protein modification; lipoprotein biosynthesis (signal peptide cleavage). This protein specifically catalyzes the removal of signal peptides from prolipoproteins. In Buchnera aphidicola subsp. Schizaphis graminum (strain Sg), this protein is Lipoprotein signal peptidase.